Reading from the N-terminus, the 395-residue chain is Inactive serine protease 54 (395 aa).

A signal peptide spans 1-30 (MVSAAGLSGDGKMRGVLLVLLGLLYSSTSC). The Peptidase S1 domain maps to 37–269 (VFYGPDPKEG…YSKWITSKAE (233 aa)). Asn123 carries an N-linked (GlcNAc...) asparagine glycan. Intrachain disulfides connect Cys164/Cys227, Cys195/Cys205, and Cys217/Cys248. Residues 324–348 (RLGNSSRDSLDVREKDVKESGRSPE) form a disordered region. Asn327 carries N-linked (GlcNAc...) asparagine glycosylation. The span at 331 to 345 (DSLDVREKDVKESGR) shows a compositional bias: basic and acidic residues.

Belongs to the peptidase S1 family. Plasma kallikrein subfamily.

The protein localises to the secreted. The polypeptide is Inactive serine protease 54 (PRSS54) (Homo sapiens (Human)).